Consider the following 243-residue polypeptide: 1-(5-phosphoribosyl)-5-[(5-phosphoribosylamino)methylideneamino] imidazole-4-carboxamide isomerase (243 aa).

Residue D8 is the Proton acceptor of the active site. Residue D129 is the Proton donor of the active site.

Belongs to the HisA/HisF family.

The protein localises to the cytoplasm. The catalysed reaction is 1-(5-phospho-beta-D-ribosyl)-5-[(5-phospho-beta-D-ribosylamino)methylideneamino]imidazole-4-carboxamide = 5-[(5-phospho-1-deoxy-D-ribulos-1-ylimino)methylamino]-1-(5-phospho-beta-D-ribosyl)imidazole-4-carboxamide. It participates in amino-acid biosynthesis; L-histidine biosynthesis; L-histidine from 5-phospho-alpha-D-ribose 1-diphosphate: step 4/9. The chain is 1-(5-phosphoribosyl)-5-[(5-phosphoribosylamino)methylideneamino] imidazole-4-carboxamide isomerase from Citrifermentans bemidjiense (strain ATCC BAA-1014 / DSM 16622 / JCM 12645 / Bem) (Geobacter bemidjiensis).